A 470-amino-acid chain; its full sequence is ATP synthase subunit beta (470 aa).

Position 157–164 (Gly157–Thr164) interacts with ATP.

Belongs to the ATPase alpha/beta chains family. In terms of assembly, F-type ATPases have 2 components, CF(1) - the catalytic core - and CF(0) - the membrane proton channel. CF(1) has five subunits: alpha(3), beta(3), gamma(1), delta(1), epsilon(1). CF(0) has three main subunits: a(1), b(2) and c(9-12). The alpha and beta chains form an alternating ring which encloses part of the gamma chain. CF(1) is attached to CF(0) by a central stalk formed by the gamma and epsilon chains, while a peripheral stalk is formed by the delta and b chains.

It localises to the cell inner membrane. It carries out the reaction ATP + H2O + 4 H(+)(in) = ADP + phosphate + 5 H(+)(out). Its function is as follows. Produces ATP from ADP in the presence of a proton gradient across the membrane. The catalytic sites are hosted primarily by the beta subunits. This is ATP synthase subunit beta from Geobacter sulfurreducens (strain ATCC 51573 / DSM 12127 / PCA).